The chain runs to 295 residues: Ethanolamine ammonia-lyase small subunit (295 aa).

Residues V209 and E230 each contribute to the adenosylcob(III)alamin site.

It belongs to the EutC family. In terms of assembly, the basic unit is a heterodimer which dimerizes to form tetramers. The heterotetramers trimerize; 6 large subunits form a core ring with 6 small subunits projecting outwards. Adenosylcob(III)alamin is required as a cofactor.

It localises to the bacterial microcompartment. The catalysed reaction is ethanolamine = acetaldehyde + NH4(+). It functions in the pathway amine and polyamine degradation; ethanolamine degradation. Functionally, catalyzes the deamination of various vicinal amino-alcohols to oxo compounds. Allows this organism to utilize ethanolamine as the sole source of nitrogen and carbon in the presence of external vitamin B12. This Clostridium perfringens (strain ATCC 13124 / DSM 756 / JCM 1290 / NCIMB 6125 / NCTC 8237 / Type A) protein is Ethanolamine ammonia-lyase small subunit.